The primary structure comprises 252 residues: 2-succinyl-6-hydroxy-2,4-cyclohexadiene-1-carboxylate synthase (252 aa).

The protein belongs to the AB hydrolase superfamily. MenH family. Monomer.

The catalysed reaction is 5-enolpyruvoyl-6-hydroxy-2-succinyl-cyclohex-3-ene-1-carboxylate = (1R,6R)-6-hydroxy-2-succinyl-cyclohexa-2,4-diene-1-carboxylate + pyruvate. It participates in quinol/quinone metabolism; 1,4-dihydroxy-2-naphthoate biosynthesis; 1,4-dihydroxy-2-naphthoate from chorismate: step 3/7. It functions in the pathway quinol/quinone metabolism; menaquinone biosynthesis. Catalyzes a proton abstraction reaction that results in 2,5-elimination of pyruvate from 2-succinyl-5-enolpyruvyl-6-hydroxy-3-cyclohexene-1-carboxylate (SEPHCHC) and the formation of 2-succinyl-6-hydroxy-2,4-cyclohexadiene-1-carboxylate (SHCHC). The protein is 2-succinyl-6-hydroxy-2,4-cyclohexadiene-1-carboxylate synthase of Klebsiella pneumoniae (strain 342).